We begin with the raw amino-acid sequence, 75 residues long: UPF0154 protein SERP0914 (75 aa).

A helical membrane pass occupies residues 3–23 (IWVAIILIVIALIAGLIGGFL).

It belongs to the UPF0154 family.

It localises to the membrane. The sequence is that of UPF0154 protein SERP0914 from Staphylococcus epidermidis (strain ATCC 35984 / DSM 28319 / BCRC 17069 / CCUG 31568 / BM 3577 / RP62A).